Reading from the N-terminus, the 185-residue chain is Ribosome-recycling factor (185 aa).

This sequence belongs to the RRF family.

It localises to the cytoplasm. Functionally, responsible for the release of ribosomes from messenger RNA at the termination of protein biosynthesis. May increase the efficiency of translation by recycling ribosomes from one round of translation to another. This is Ribosome-recycling factor from Pseudomonas syringae pv. tomato (strain ATCC BAA-871 / DC3000).